Consider the following 84-residue polypeptide: ATP synthase subunit c (84 aa).

A run of 2 helical transmembrane segments spans residues 9 to 29 (IIGASILLAFAALGTAIGFAI) and 54 to 74 (IVAGLLDAIAMIAVGISLLFI).

The protein belongs to the ATPase C chain family. In terms of assembly, F-type ATPases have 2 components, F(1) - the catalytic core - and F(0) - the membrane proton channel. F(1) has five subunits: alpha(3), beta(3), gamma(1), delta(1), epsilon(1). F(0) has three main subunits: a(1), b(2) and c(10-14). The alpha and beta chains form an alternating ring which encloses part of the gamma chain. F(1) is attached to F(0) by a central stalk formed by the gamma and epsilon chains, while a peripheral stalk is formed by the delta and b chains.

Its subcellular location is the cell inner membrane. F(1)F(0) ATP synthase produces ATP from ADP in the presence of a proton or sodium gradient. F-type ATPases consist of two structural domains, F(1) containing the extramembraneous catalytic core and F(0) containing the membrane proton channel, linked together by a central stalk and a peripheral stalk. During catalysis, ATP synthesis in the catalytic domain of F(1) is coupled via a rotary mechanism of the central stalk subunits to proton translocation. Functionally, key component of the F(0) channel; it plays a direct role in translocation across the membrane. A homomeric c-ring of between 10-14 subunits forms the central stalk rotor element with the F(1) delta and epsilon subunits. The protein is ATP synthase subunit c of Actinobacillus pleuropneumoniae serotype 7 (strain AP76).